The sequence spans 232 residues: Phosphatidylserine decarboxylase proenzyme (232 aa).

Ser190 serves as the catalytic Schiff-base intermediate with substrate; via pyruvic acid. Ser190 is subject to Pyruvic acid (Ser); by autocatalysis.

This sequence belongs to the phosphatidylserine decarboxylase family. PSD-A subfamily. As to quaternary structure, heterodimer of a large membrane-associated beta subunit and a small pyruvoyl-containing alpha subunit. It depends on pyruvate as a cofactor. Post-translationally, is synthesized initially as an inactive proenzyme. Formation of the active enzyme involves a self-maturation process in which the active site pyruvoyl group is generated from an internal serine residue via an autocatalytic post-translational modification. Two non-identical subunits are generated from the proenzyme in this reaction, and the pyruvate is formed at the N-terminus of the alpha chain, which is derived from the carboxyl end of the proenzyme. The post-translation cleavage follows an unusual pathway, termed non-hydrolytic serinolysis, in which the side chain hydroxyl group of the serine supplies its oxygen atom to form the C-terminus of the beta chain, while the remainder of the serine residue undergoes an oxidative deamination to produce ammonia and the pyruvoyl prosthetic group on the alpha chain.

It is found in the cell membrane. It catalyses the reaction a 1,2-diacyl-sn-glycero-3-phospho-L-serine + H(+) = a 1,2-diacyl-sn-glycero-3-phosphoethanolamine + CO2. Its pathway is phospholipid metabolism; phosphatidylethanolamine biosynthesis; phosphatidylethanolamine from CDP-diacylglycerol: step 2/2. Its function is as follows. Catalyzes the formation of phosphatidylethanolamine (PtdEtn) from phosphatidylserine (PtdSer). In Rhizobium etli (strain ATCC 51251 / DSM 11541 / JCM 21823 / NBRC 15573 / CFN 42), this protein is Phosphatidylserine decarboxylase proenzyme.